The primary structure comprises 822 residues: Putative pentatricopeptide repeat-containing protein At5g13230, mitochondrial (822 aa).

The N-terminal 70 residues, 1 to 70 (MIVFMRIIHV…QKNDPISAKA (70 aa)), are a transit peptide targeting the mitochondrion. 16 PPR repeats span residues 48-82 (DSHA…GSCL), 83-117 (DLFA…NNVS), 145-179 (NPHV…GYDS), 180-210 (NAFV…ILCK), 211-245 (DIVV…GFMP), 246-280 (NNYT…CYVL), 281-311 (DPRV…MPKN), 312-346 (DVVP…FVVP), 347-381 (NEFT…GFDL), 382-416 (DIYV…NEVS), 417-447 (WNTV…QVSV), 448-482 (TEVT…NNAK), 483-513 (KVAV…METI), 514-548 (DVAS…DCKP), 549-584 (NGLT…GIEP), and 585-619 (CLEH…PSVM). Residues 620–695 (IWRAMLSASM…EPGLSWIEHQ (76 aa)) form a type E motif region. A type E(+) motif region spans residues 696–726 (GDVHYFSVGLSDHPDMKLINGMLEWLNMKAT). The type DYW motif stretch occupies residues 727–822 (RAGYVPDRNA…AGVCSCGDHW (96 aa)).

The protein belongs to the PPR family. PCMP-H subfamily.

It is found in the mitochondrion. The sequence is that of Putative pentatricopeptide repeat-containing protein At5g13230, mitochondrial (PCMP-H89) from Arabidopsis thaliana (Mouse-ear cress).